The following is a 235-amino-acid chain: Large ribosomal subunit protein uL1 (235 aa).

Belongs to the universal ribosomal protein uL1 family. As to quaternary structure, part of the 50S ribosomal subunit.

Binds directly to 23S rRNA. The L1 stalk is quite mobile in the ribosome, and is involved in E site tRNA release. Functionally, protein L1 is also a translational repressor protein, it controls the translation of the L11 operon by binding to its mRNA. This Halothermothrix orenii (strain H 168 / OCM 544 / DSM 9562) protein is Large ribosomal subunit protein uL1.